The chain runs to 98 residues: NADH-ubiquinone oxidoreductase chain 4L (98 aa).

3 helical membrane passes run M1–M21, A29–L49, and I61–V81.

Belongs to the complex I subunit 4L family. In terms of assembly, core subunit of respiratory chain NADH dehydrogenase (Complex I) which is composed of 45 different subunits.

It is found in the mitochondrion inner membrane. It catalyses the reaction a ubiquinone + NADH + 5 H(+)(in) = a ubiquinol + NAD(+) + 4 H(+)(out). Its function is as follows. Core subunit of the mitochondrial membrane respiratory chain NADH dehydrogenase (Complex I) which catalyzes electron transfer from NADH through the respiratory chain, using ubiquinone as an electron acceptor. Part of the enzyme membrane arm which is embedded in the lipid bilayer and involved in proton translocation. In Rhinophylla pumilio (Dwarf little fruit bat), this protein is NADH-ubiquinone oxidoreductase chain 4L (MT-ND4L).